A 942-amino-acid polypeptide reads, in one-letter code: Isoleucine--tRNA ligase (942 aa).

A 'HIGH' region motif is present at residues 58–68 (PYANGDIHIGH). E566 lines the L-isoleucyl-5'-AMP pocket. A 'KMSKS' region motif is present at residues 607–611 (KMSKS). K610 contacts ATP. 4 residues coordinate Zn(2+): C905, C908, C925, and C928.

It belongs to the class-I aminoacyl-tRNA synthetase family. IleS type 1 subfamily. In terms of assembly, monomer. Requires Zn(2+) as cofactor.

The protein localises to the cytoplasm. It carries out the reaction tRNA(Ile) + L-isoleucine + ATP = L-isoleucyl-tRNA(Ile) + AMP + diphosphate. Catalyzes the attachment of isoleucine to tRNA(Ile). As IleRS can inadvertently accommodate and process structurally similar amino acids such as valine, to avoid such errors it has two additional distinct tRNA(Ile)-dependent editing activities. One activity is designated as 'pretransfer' editing and involves the hydrolysis of activated Val-AMP. The other activity is designated 'posttransfer' editing and involves deacylation of mischarged Val-tRNA(Ile). In Pseudoalteromonas atlantica (strain T6c / ATCC BAA-1087), this protein is Isoleucine--tRNA ligase.